We begin with the raw amino-acid sequence, 402 residues long: Advanced glycosylation end product-specific receptor (402 aa).

Residues 1–22 form the signal peptide; the sequence is MPTGTVARAWVLVLALWGAVAG. Residues 23–109 enclose the Ig-like V-type domain; it reads GQNITARIGE…ATNRLGKEVK (87 aa). Topologically, residues 23–341 are extracellular; that stretch reads GQNITARIGE…DGSGLGTLAL (319 aa). N25 and N80 each carry an N-linked (GlcNAc...) asparagine glycan. 2 cysteine pairs are disulfide-bonded: C38/C98 and C143/C206. Ig-like C2-type domains follow at residues 123–219 and 233–315; these read PEIV…RPLN and PEGI…PPVN. Residues 342-362 form a helical membrane-spanning segment; sequence ALGILGGLGIAALLIGAILWR. At 363-402 the chain is on the cytoplasmic side; that stretch reads KRQPRLEERKAPESQEDEEERAELNQSEEAEMPENGAGGP. The tract at residues 368–402 is disordered; that stretch reads LEERKAPESQEDEEERAELNQSEEAEMPENGAGGP. Phosphoserine occurs at positions 376 and 389. Acidic residues predominate over residues 376–394; sequence SQEDEEERAELNQSEEAEM.

Constitutive homodimer; disulfide-linked. Forms homooligomers. Interacts with S100A1 and APP. Interacts with S100B, S100A12 and S100A14. Interacts with TIRAP. Interacts with HMGB1. Interacts with LGP2; this interaction plays an important role in AGER-mediated pro-inflammatory responses and cytokine release. Interacts with double-strand break repair protein MRE11 which is a core component of the MRN complex; the interaction enhances MRE11 endonuclease activity and promotes DNA repair. Interacts with the MCM2-7 complex via interaction with complex member MCM2; the interaction is increased following DNA replication stress and stabilizes the MCM2-7 complex at replication forks. Post-translationally, phosphorylated on its cytoplasmic domain by PKCzeta/PRKCZ upon ligand binding. Phosphorylated by ATM following DNA damage. In terms of processing, targeted by the ubiquitin E3 ligase subunit FBXO10 to mediate its ubiquitination and degradation. As to expression, endothelial cells and cardiomyocytes. Expressed in brain.

The protein resides in the cell membrane. It is found in the cell projection. The protein localises to the phagocytic cup. Its subcellular location is the early endosome. It localises to the nucleus. Cell surface pattern recognition receptor that senses endogenous stress signals with a broad ligand repertoire including advanced glycation end products, S100 proteins, high-mobility group box 1 protein/HMGB1, amyloid beta/APP oligomers, nucleic acids, histones, phospholipids and glycosaminoglycans. Advanced glycosylation end products are nonenzymatically glycosylated proteins which accumulate in vascular tissue in aging and at an accelerated rate in diabetes. These ligands accumulate at inflammatory sites during the pathogenesis of various diseases including diabetes, vascular complications, neurodegenerative disorders and cancers, and RAGE transduces their binding into pro-inflammatory responses. Upon ligand binding, uses TIRAP and MYD88 as adapters to transduce the signal ultimately leading to the induction of inflammatory cytokines IL6, IL8 and TNFalpha through activation of NF-kappa-B. Interaction with S100A12 on endothelium, mononuclear phagocytes, and lymphocytes triggers cellular activation, with generation of key pro-inflammatory mediators. Interaction with S100B after myocardial infarction may play a role in myocyte apoptosis by activating ERK1/2 and p53/TP53 signaling. Contributes to the translocation of amyloid-beta peptide (ABPP) across the cell membrane from the extracellular to the intracellular space in cortical neurons. ABPP-initiated RAGE signaling, especially stimulation of p38 mitogen-activated protein kinase (MAPK), has the capacity to drive a transport system delivering ABPP as a complex with RAGE to the intraneuronal space. Participates in endothelial albumin transcytosis together with HMGB1 through the RAGE/SRC/Caveolin-1 pathway, leading to endothelial hyperpermeability. Mediates the loading of HMGB1 in extracellular vesicles (EVs) that shuttle HMGB1 to hepatocytes by transferrin-mediated endocytosis and subsequently promote hepatocyte pyroptosis by activating the NLRP3 inflammasome. Binds to DNA and promotes extracellular hypomethylated DNA (CpG DNA) uptake by cells via the endosomal route to activate inflammatory responses. Mediates phagocytosis by non-professional phagocytes (NPP) and this is enhanced by binding to ligands including RNA, DNA, HMGB1 and histones. Promotes NPP-mediated phagocytosis of Saccharomyces cerevisiae spores by binding to RNA attached to the spore wall. Also promotes NPP-mediated phagocytosis of apoptotic cells. Following DNA damage, recruited to DNA double-strand break sites where it colocalizes with the MRN repair complex via interaction with double-strand break repair protein MRE11. Enhances the endonuclease activity of MRE11, promoting the end resection of damaged DNA. Promotes DNA damage repair in trophoblasts which enhances trophoblast invasion and contributes to placental development and maintenance. Protects cells from DNA replication stress by localizing to damaged replication forks where it stabilizes the MCM2-7 complex and promotes faithful progression of the replication fork. This Rattus norvegicus (Rat) protein is Advanced glycosylation end product-specific receptor (Ager).